A 285-amino-acid polypeptide reads, in one-letter code: MARHVWQAGRFEIGLDKPKIMGIVNLTPDSFSDGGVYSQNAQTALAHAEQLLKEGADILDIGGESTRSGADYVSPEEEWARVEPVLAEVAGWGVPISLDTRRTVIMEKALALGGIDIINDVAALNDEGAVELLARQADTGICLMHMQGLPKTMQINPKYQDVVGEVARYLKARSAECIAAGIAPQRIILDPGFGSGFGKPLQHNIALMRHLPELMAETGFPLLIGVSRKSTIGELTGEANAAERVHGSVAAALASVARGAQIVRVHDVKATADALKVWEALGINL.

The Pterin-binding domain occupies P18–K276. N25 provides a ligand contact to Mg(2+). Residues T66, D99, N119, D190, K229, and R264–H266 each bind (7,8-dihydropterin-6-yl)methyl diphosphate.

Belongs to the DHPS family. Homodimer. Mg(2+) is required as a cofactor.

The catalysed reaction is (7,8-dihydropterin-6-yl)methyl diphosphate + 4-aminobenzoate = 7,8-dihydropteroate + diphosphate. It participates in cofactor biosynthesis; tetrahydrofolate biosynthesis; 7,8-dihydrofolate from 2-amino-4-hydroxy-6-hydroxymethyl-7,8-dihydropteridine diphosphate and 4-aminobenzoate: step 1/2. Functionally, catalyzes the condensation of para-aminobenzoate (pABA) with 6-hydroxymethyl-7,8-dihydropterin diphosphate (DHPt-PP) to form 7,8-dihydropteroate (H2Pte), the immediate precursor of folate derivatives. In Neisseria meningitidis serogroup B (strain ATCC BAA-335 / MC58), this protein is Dihydropteroate synthase (folP).